The following is a 345-amino-acid chain: S-adenosylmethionine:tRNA ribosyltransferase-isomerase (345 aa).

This sequence belongs to the QueA family. As to quaternary structure, monomer.

Its subcellular location is the cytoplasm. The catalysed reaction is 7-aminomethyl-7-carbaguanosine(34) in tRNA + S-adenosyl-L-methionine = epoxyqueuosine(34) in tRNA + adenine + L-methionine + 2 H(+). It functions in the pathway tRNA modification; tRNA-queuosine biosynthesis. In terms of biological role, transfers and isomerizes the ribose moiety from AdoMet to the 7-aminomethyl group of 7-deazaguanine (preQ1-tRNA) to give epoxyqueuosine (oQ-tRNA). In Shewanella sp. (strain W3-18-1), this protein is S-adenosylmethionine:tRNA ribosyltransferase-isomerase.